We begin with the raw amino-acid sequence, 61 residues long: UPF0370 protein SG1720 (61 aa).

A helical membrane pass occupies residues 3-23; it reads WLADYWWVVLLVLAGMLIGGV. Basic and acidic residues predominate over residues 37 to 47; sequence NRPELPPHRDN. The disordered stretch occupies residues 37 to 61; that stretch reads NRPELPPHRDNNAQWDEEDDWPKKP. Positions 51–61 are enriched in acidic residues; that stretch reads WDEEDDWPKKP.

The protein belongs to the UPF0370 family.

The protein localises to the cell membrane. In Sodalis glossinidius (strain morsitans), this protein is UPF0370 protein SG1720.